A 676-amino-acid chain; its full sequence is Solute carrier family 26 member 10 (676 aa).

A disordered region spans residues 1-24 (MSGPLASGTCSDPEEVSDLKSPLS). The next 11 helical transmembrane spans lie at 101–121 (AVAG…FALL), 124–144 (VPPV…SLLG), 149–165 (LSTG…GSVV), 190–210 (VGAA…MFVL), 226–246 (ALTS…LLGL), 267–287 (ALSQ…VLLV), 300–320 (LLTP…LCFT), 353–373 (ILAD…SLAS), 398–418 (ISSL…SLLV), 426–446 (LAGL…RPFF), and 487–507 (IVTW…VGVV). Residues 539–660 (ESRKLLQVPG…VSVQDAAAHA (122 aa)) form the STAS domain.

The protein belongs to the SLC26A/SulP transporter (TC 2.A.53) family.

It is found in the membrane. Chloride/bicarbonate exchanger. The protein is Solute carrier family 26 member 10 (Slc26a10) of Mus musculus (Mouse).